The sequence spans 749 residues: Pectate disaccharide-lyase (749 aa).

Positions 1-26 are cleaved as a signal peptide; that stretch reads MKYAASGLLSVALNSLLLLGSNQRFA. 4 residues coordinate Ca(2+): D538, D562, D563, and D566. K595 serves as the catalytic Proton acceptor.

The protein belongs to the polysaccharide lyase 9 family. The cofactor is Ca(2+).

The protein localises to the secreted. It carries out the reaction [(1-&gt;4)-alpha-D-galacturonosyl](n) = 4-(4-deoxy-alpha-D-galact-4-enuronosyl)-D-galacturonate + [(1-&gt;4)-alpha-D-galacturonosyl](n-2). Activity on pectate is nearly completely inhibited by ethyleneglycol-bis-(P-aminoethyl ether) N,N'-tetraacetic acid (EGTA), EDTA or nitrilotriacetic acid. Activity is specifically restored by the addition of Ca(2+). Functionally, exo-cleaving lyase that catalyzes the digestion of pectate. Contributes to pectate catabolism but not to bacterial virulence. In vitro can also use citrus pectin and highly methyl-esterified Link pectin as substrates. The sequence is that of Pectate disaccharide-lyase from Dickeya chrysanthemi (Pectobacterium chrysanthemi).